Consider the following 138-residue polypeptide: Acidic phospholipase A2 Cvv-E6a (138 aa).

Residues 1–16 form the signal peptide; it reads MRTLWIVAVLLLGVEG. Intrachain disulfides connect cysteine 42–cysteine 131, cysteine 44–cysteine 60, cysteine 59–cysteine 111, cysteine 65–cysteine 138, cysteine 66–cysteine 104, cysteine 73–cysteine 97, and cysteine 91–cysteine 102. Ca(2+) is bound by residues tyrosine 43, glycine 45, and glycine 47. The active site involves histidine 63. Residue aspartate 64 participates in Ca(2+) binding. Aspartate 105 is a catalytic residue.

This sequence belongs to the phospholipase A2 family. Group II subfamily. D49 sub-subfamily. Ca(2+) is required as a cofactor. In terms of tissue distribution, expressed by the venom gland.

It localises to the secreted. It catalyses the reaction a 1,2-diacyl-sn-glycero-3-phosphocholine + H2O = a 1-acyl-sn-glycero-3-phosphocholine + a fatty acid + H(+). Its function is as follows. Snake venom phospholipase A2 (PLA2) that significantly inhibits ADP-induced platelet aggregation in platelet-rich plasma of human, rabbit and guinea pig. PLA2 catalyzes the calcium-dependent hydrolysis of the 2-acyl groups in 3-sn-phosphoglycerides. This Crotalus viridis viridis (Prairie rattlesnake) protein is Acidic phospholipase A2 Cvv-E6a.